A 773-amino-acid chain; its full sequence is 5-methyltetrahydropteroyltriglutamate--homocysteine methyltransferase (773 aa).

Residues 16–19 and Lys-116 each bind 5-methyltetrahydropteroyltri-L-glutamate; that span reads RELK. L-homocysteine is bound by residues 437–439 and Glu-490; that span reads IGS. L-methionine is bound by residues 437–439 and Glu-490; that span reads IGS. 5-methyltetrahydropteroyltri-L-glutamate contacts are provided by residues 521–522 and Trp-567; that span reads RC. Asp-605 provides a ligand contact to L-homocysteine. Asp-605 contacts L-methionine. Glu-611 serves as a coordination point for 5-methyltetrahydropteroyltri-L-glutamate. Residues His-647, Cys-649, and Glu-671 each contribute to the Zn(2+) site. The active-site Proton donor is His-700. Residue Cys-732 coordinates Zn(2+).

This sequence belongs to the vitamin-B12 independent methionine synthase family. Zn(2+) serves as cofactor.

It carries out the reaction 5-methyltetrahydropteroyltri-L-glutamate + L-homocysteine = tetrahydropteroyltri-L-glutamate + L-methionine. The protein operates within amino-acid biosynthesis; L-methionine biosynthesis via de novo pathway; L-methionine from L-homocysteine (MetE route): step 1/1. Its function is as follows. Catalyzes the transfer of a methyl group from 5-methyltetrahydrofolate to homocysteine resulting in methionine formation. In Alkalilimnicola ehrlichii (strain ATCC BAA-1101 / DSM 17681 / MLHE-1), this protein is 5-methyltetrahydropteroyltriglutamate--homocysteine methyltransferase.